A 413-amino-acid chain; its full sequence is Multifunctional CCA protein (413 aa).

ATP-binding residues include Gly8 and Arg11. Residues Gly8 and Arg11 each coordinate CTP. Residues Asp21 and Asp23 each contribute to the Mg(2+) site. Arg91, Arg143, and Arg146 together coordinate ATP. CTP-binding residues include Arg91, Arg143, and Arg146. An HD domain is found at 232 to 333 (TGVHVMMVID…VRLLERADAL (102 aa)).

It belongs to the tRNA nucleotidyltransferase/poly(A) polymerase family. Bacterial CCA-adding enzyme type 1 subfamily. In terms of assembly, monomer. Can also form homodimers and oligomers. Mg(2+) is required as a cofactor. It depends on Ni(2+) as a cofactor.

It catalyses the reaction a tRNA precursor + 2 CTP + ATP = a tRNA with a 3' CCA end + 3 diphosphate. It carries out the reaction a tRNA with a 3' CCA end + 2 CTP + ATP = a tRNA with a 3' CCACCA end + 3 diphosphate. Functionally, catalyzes the addition and repair of the essential 3'-terminal CCA sequence in tRNAs without using a nucleic acid template. Adds these three nucleotides in the order of C, C, and A to the tRNA nucleotide-73, using CTP and ATP as substrates and producing inorganic pyrophosphate. tRNA 3'-terminal CCA addition is required both for tRNA processing and repair. Also involved in tRNA surveillance by mediating tandem CCA addition to generate a CCACCA at the 3' terminus of unstable tRNAs. While stable tRNAs receive only 3'-terminal CCA, unstable tRNAs are marked with CCACCA and rapidly degraded. The polypeptide is Multifunctional CCA protein (Burkholderia pseudomallei (strain 668)).